A 959-amino-acid chain; its full sequence is Protein SEY1 homolog 1 (959 aa).

The Cytoplasmic portion of the chain corresponds to Met-1–Lys-767. Positions Asn-9–Tyr-86 form a coiled coil. Residues Glu-62–Lys-81 are disordered. The GB1/RHD3-type G domain maps to Gly-123–Tyr-340. Gly-133–Ser-140 provides a ligand contact to GTP. The chain crosses the membrane as a helical span at residues Thr-768 to Phe-788. The Lumenal portion of the chain corresponds to Lys-789–Pro-791. Residues Thr-792–Tyr-812 form a helical membrane-spanning segment. The Cytoplasmic segment spans residues Ala-813–Phe-959. Residues Glu-849–Ser-868 are disordered.

This sequence belongs to the TRAFAC class dynamin-like GTPase superfamily. GB1/RHD3 GTPase family. RHD3 subfamily.

The protein resides in the endoplasmic reticulum membrane. Probable GTP-binding protein that may be involved in cell development. The polypeptide is Protein SEY1 homolog 1 (Entamoeba histolytica (strain ATCC 30459 / HM-1:IMSS / ABRM)).